The following is a 99-amino-acid chain: Malonate decarboxylase acyl carrier protein (99 aa).

Residue Ser25 is modified to O-(phosphoribosyl dephospho-coenzyme A)serine.

The protein belongs to the MdcC family. In terms of processing, covalently binds the prosthetic group of malonate decarboxylase.

The protein resides in the cytoplasm. Subunit of malonate decarboxylase, it is an acyl carrier protein to which acetyl and malonyl thioester residues are bound via a 2'-(5''-phosphoribosyl)-3'-dephospho-CoA prosthetic group and turn over during the catalytic mechanism. In Pseudomonas syringae pv. syringae (strain B728a), this protein is Malonate decarboxylase acyl carrier protein.